A 176-amino-acid polypeptide reads, in one-letter code: Cytochrome b (176 aa).

A run of 3 helical transmembrane segments spans residues 33–53 (FGSL…FLAM), 77–98 (WVLR…YLHV), and 113–133 (WNMG…GYVL). Heme b-binding residues include histidine 83 and histidine 97.

The protein belongs to the cytochrome b family. In terms of assembly, the cytochrome bc1 complex contains 11 subunits: 3 respiratory subunits (MT-CYB, CYC1 and UQCRFS1), 2 core proteins (UQCRC1 and UQCRC2) and 6 low-molecular weight proteins (UQCRH/QCR6, UQCRB/QCR7, UQCRQ/QCR8, UQCR10/QCR9, UQCR11/QCR10 and a cleavage product of UQCRFS1). This cytochrome bc1 complex then forms a dimer. Heme b serves as cofactor.

The protein localises to the mitochondrion inner membrane. Component of the ubiquinol-cytochrome c reductase complex (complex III or cytochrome b-c1 complex) that is part of the mitochondrial respiratory chain. The b-c1 complex mediates electron transfer from ubiquinol to cytochrome c. Contributes to the generation of a proton gradient across the mitochondrial membrane that is then used for ATP synthesis. In Nycticeius humeralis (Evening bat), this protein is Cytochrome b (MT-CYB).